The sequence spans 99 residues: UPF0235 protein ASA_3628 (99 aa).

Belongs to the UPF0235 family.

The polypeptide is UPF0235 protein ASA_3628 (Aeromonas salmonicida (strain A449)).